The following is a 618-amino-acid chain: Membrane protein insertase YidC (618 aa).

A run of 6 helical transmembrane segments spans residues 3-23 (KNTI…SFLS), 363-383 (WGLS…IVVF), 439-459 (LPML…PSAI), 478-498 (FITF…FCLL), 520-540 (PQMA…LFVL), and 545-565 (SGLN…MIIL).

This sequence belongs to the OXA1/ALB3/YidC family. Type 1 subfamily. As to quaternary structure, interacts with the Sec translocase complex via SecD. Specifically interacts with transmembrane segments of nascent integral membrane proteins during membrane integration.

The protein resides in the cell membrane. In terms of biological role, required for the insertion and/or proper folding and/or complex formation of integral membrane proteins into the membrane. Involved in integration of membrane proteins that insert both dependently and independently of the Sec translocase complex, as well as at least some lipoproteins. Aids folding of multispanning membrane proteins. In Bacteroides fragilis (strain YCH46), this protein is Membrane protein insertase YidC.